Here is a 97-residue protein sequence, read N- to C-terminus: MEARDVILRPVVTESSMADLDDKRYTFDVNVQATKTQVKKAIEEIFDVKVVKVNVMNVKGKLKRQGRYAGYTKKRRKAIVTLSSDSNEIKLFNDDQQ.

This sequence belongs to the universal ribosomal protein uL23 family. In terms of assembly, part of the 50S ribosomal subunit. Contacts protein L29, and trigger factor when it is bound to the ribosome.

Its function is as follows. One of the early assembly proteins it binds 23S rRNA. One of the proteins that surrounds the polypeptide exit tunnel on the outside of the ribosome. Forms the main docking site for trigger factor binding to the ribosome. The chain is Large ribosomal subunit protein uL23 from Lactiplantibacillus plantarum (strain ATCC BAA-793 / NCIMB 8826 / WCFS1) (Lactobacillus plantarum).